A 392-amino-acid chain; its full sequence is Formate-dependent phosphoribosylglycinamide formyltransferase (392 aa).

N(1)-(5-phospho-beta-D-ribosyl)glycinamide contacts are provided by residues Glu22 to Leu23 and Glu82. ATP contacts are provided by residues Arg114, Lys155, Ser160–Gln165, Glu195–Val198, and Glu203. The ATP-grasp domain maps to Arg119–Leu308. Mg(2+) contacts are provided by Glu267 and Glu279. N(1)-(5-phospho-beta-D-ribosyl)glycinamide contacts are provided by residues Asp286, Lys355, and Arg362 to Arg363.

It belongs to the PurK/PurT family. Homodimer.

It carries out the reaction N(1)-(5-phospho-beta-D-ribosyl)glycinamide + formate + ATP = N(2)-formyl-N(1)-(5-phospho-beta-D-ribosyl)glycinamide + ADP + phosphate + H(+). The protein operates within purine metabolism; IMP biosynthesis via de novo pathway; N(2)-formyl-N(1)-(5-phospho-D-ribosyl)glycinamide from N(1)-(5-phospho-D-ribosyl)glycinamide (formate route): step 1/1. Its function is as follows. Involved in the de novo purine biosynthesis. Catalyzes the transfer of formate to 5-phospho-ribosyl-glycinamide (GAR), producing 5-phospho-ribosyl-N-formylglycinamide (FGAR). Formate is provided by PurU via hydrolysis of 10-formyl-tetrahydrofolate. This Shigella dysenteriae serotype 1 (strain Sd197) protein is Formate-dependent phosphoribosylglycinamide formyltransferase.